The following is a 62-amino-acid chain: Large ribosomal subunit protein bL28 (62 aa).

This sequence belongs to the bacterial ribosomal protein bL28 family.

This is Large ribosomal subunit protein bL28 from Syntrophomonas wolfei subsp. wolfei (strain DSM 2245B / Goettingen).